The following is a 499-amino-acid chain: uncharacterized protein (499 aa).

2 disordered regions span residues 76 to 118 (QATA…RLSP) and 208 to 268 (DFET…DWAN). The span at 87-104 (DPEKQTGKSRYHPSEEIR) shows a compositional bias: basic and acidic residues. Acidic residues predominate over residues 208–263 (DFETEDDESGDDDSEDTGEDEDEEEWVAILEDEDEDDDDDDDDDEDDDDSDSDESL). At S355 the chain carries Phosphoserine. A disordered region spans residues 478–499 (AEGQIRKLLFPKTNQSTQPKPK). The span at 489 to 499 (KTNQSTQPKPK) shows a compositional bias: polar residues.

This is an uncharacterized protein from Arabidopsis thaliana (Mouse-ear cress).